The primary structure comprises 113 residues: Integration host factor subunit alpha (113 aa).

It belongs to the bacterial histone-like protein family. As to quaternary structure, heterodimer of an alpha and a beta chain.

In terms of biological role, this protein is one of the two subunits of integration host factor, a specific DNA-binding protein that functions in genetic recombination as well as in transcriptional and translational control. In Rhodopseudomonas palustris (strain BisA53), this protein is Integration host factor subunit alpha.